The chain runs to 466 residues: Secreted RxLR effector protein 101 (466 aa).

An N-terminal signal peptide occupies residues 1–21; the sequence is MRGAYSVITALLVVASSQIAA. The RxLR-dEER signature appears at 48 to 63; sequence RYLRGSQHVHDSNEER. Disordered stretches follow at residues 99 to 127 and 384 to 405; these read KMPH…GANA and RTFN…VRSS. A compositionally biased stretch (basic residues) spans 109–121; the sequence is KVSRVTRTGKKMT. The span at 385-395 shows a compositional bias: polar residues; the sequence is TFNGNTDTASL.

The protein belongs to the RxLR effector family.

It is found in the secreted. It localises to the host nucleus. Secreted effector that partially suppresses the host cell death induced by cell death-inducing proteins. The chain is Secreted RxLR effector protein 101 from Plasmopara viticola (Downy mildew of grapevine).